A 508-amino-acid polypeptide reads, in one-letter code: Cobyric acid synthase (508 aa).

The region spanning 266–464 is the GATase cobBQ-type domain; the sequence is SLRIAVVAYP…AHGLFESTEV (199 aa). The active-site Nucleophile is the Cys-347. Residue His-456 is part of the active site.

It belongs to the CobB/CobQ family. CobQ subfamily.

Its pathway is cofactor biosynthesis; adenosylcobalamin biosynthesis. Its function is as follows. Catalyzes amidations at positions B, D, E, and G on adenosylcobyrinic A,C-diamide. NH(2) groups are provided by glutamine, and one molecule of ATP is hydrogenolyzed for each amidation. The sequence is that of Cobyric acid synthase from Methylibium petroleiphilum (strain ATCC BAA-1232 / LMG 22953 / PM1).